Reading from the N-terminus, the 580-residue chain is Glyco-Gag protein (580 aa).

At 1–51 (MSGASSGTAIGAHLFGVSPEYRVLIGDGGAGPSKSLSEVSFSVWYRSRAAR) the chain is on the cytoplasmic side. A helical membrane pass occupies residues 52 to 72 (LVILCLVASFLVPCLTFLIAE). The Extracellular portion of the chain corresponds to 73–580 (AVMGQTVTTP…ANSTLLNLED (508 aa)). The N-linked (GlcNAc...) asparagine; by host glycan is linked to Asn-134. Disordered stretches follow at residues 171-282 (VRPF…NRPQ), 491-514 (ETPEEREERLWQRQEERDKKRHKE), and 560-580 (RDCPKRPRKKPANSTLLNLED). Pro residues predominate over residues 174 to 193 (FLPPPKPPTPLPQPLSPQPS). Positions 194–203 (APLTSSLYPV) are enriched in low complexity. Composition is skewed to pro residues over residues 204–220 (VPKPDPPKPPVLPPDPS) and 230–245 (EPPPYPGGHGPPPSGP). Over residues 491–508 (ETPEEREERLWQRQEERD) the composition is skewed to basic and acidic residues. The span at 571-580 (ANSTLLNLED) shows a compositional bias: polar residues. Asn-572 carries an N-linked (GlcNAc...) asparagine; by host glycan.

Post-translationally, glycosylated by host. Cleaved by host near the middle of the molecule, releasing the c-terminal half containing capsid and nucleoprotein domains op GAG.

The protein localises to the host cell membrane. Plays a role in viral particle release. Presumably acts by facilitating the fission of the virion bud at the cell surface. This chain is Glyco-Gag protein, found in Feline leukemia virus.